The chain runs to 504 residues: Maturase K (504 aa).

This sequence belongs to the intron maturase 2 family. MatK subfamily.

It localises to the plastid. It is found in the chloroplast. Functionally, usually encoded in the trnK tRNA gene intron. Probably assists in splicing its own and other chloroplast group II introns. The sequence is that of Maturase K from Quercus cerris (Turkey oak).